The chain runs to 453 residues: Phosphoglucosamine mutase (453 aa).

The active-site Phosphoserine intermediate is the Ser109. Mg(2+) is bound by residues Ser109, Asp246, Asp248, and Asp250. Ser109 is modified (phosphoserine).

It belongs to the phosphohexose mutase family. It depends on Mg(2+) as a cofactor. Activated by phosphorylation.

The catalysed reaction is alpha-D-glucosamine 1-phosphate = D-glucosamine 6-phosphate. Its function is as follows. Catalyzes the conversion of glucosamine-6-phosphate to glucosamine-1-phosphate. The chain is Phosphoglucosamine mutase from Leifsonia xyli subsp. xyli (strain CTCB07).